A 430-amino-acid chain; its full sequence is Adenylosuccinate synthetase (430 aa).

GTP-binding positions include 12 to 18 (GDEGKGK) and 40 to 42 (GHT). Asp-13 serves as the catalytic Proton acceptor. Positions 13 and 40 each coordinate Mg(2+). Residues 13–16 (DEGK), 38–41 (NAGH), Thr-128, Arg-142, Gln-223, Thr-238, and Arg-302 each bind IMP. The active-site Proton donor is the His-41. 298–304 (TTTGRPR) is a binding site for substrate. Residues Arg-304, 330 to 332 (SID), and 412 to 414 (SVG) each bind GTP.

This sequence belongs to the adenylosuccinate synthetase family. Homodimer. Mg(2+) is required as a cofactor.

It localises to the cytoplasm. The enzyme catalyses IMP + L-aspartate + GTP = N(6)-(1,2-dicarboxyethyl)-AMP + GDP + phosphate + 2 H(+). It functions in the pathway purine metabolism; AMP biosynthesis via de novo pathway; AMP from IMP: step 1/2. Functionally, plays an important role in the de novo pathway of purine nucleotide biosynthesis. Catalyzes the first committed step in the biosynthesis of AMP from IMP. The chain is Adenylosuccinate synthetase from Streptococcus pyogenes serotype M12 (strain MGAS9429).